A 346-amino-acid polypeptide reads, in one-letter code: tRNA N6-adenosine threonylcarbamoyltransferase (346 aa).

Fe cation is bound by residues H109, H113, and Y135. Residues 135 to 139, D167, G180, E184, and N263 contribute to the substrate site; that span reads YVSGG. D291 is a Fe cation binding site.

This sequence belongs to the KAE1 / TsaD family. In terms of assembly, monomer. Component of the KEOPS complex that consists of Kae1, Bud32, Cgi121 and Pcc1; the whole complex dimerizes. Fe(2+) serves as cofactor.

It is found in the cytoplasm. It catalyses the reaction L-threonylcarbamoyladenylate + adenosine(37) in tRNA = N(6)-L-threonylcarbamoyladenosine(37) in tRNA + AMP + H(+). Its function is as follows. Required for the formation of a threonylcarbamoyl group on adenosine at position 37 (t(6)A37) in tRNAs that read codons beginning with adenine. Is a component of the KEOPS complex that is probably involved in the transfer of the threonylcarbamoyl moiety of threonylcarbamoyl-AMP (TC-AMP) to the N6 group of A37. Kae1 likely plays a direct catalytic role in this reaction, but requires other protein(s) of the complex to fulfill this activity. This Methanopyrus kandleri (strain AV19 / DSM 6324 / JCM 9639 / NBRC 100938) protein is tRNA N6-adenosine threonylcarbamoyltransferase.